We begin with the raw amino-acid sequence, 575 residues long: Amino-acid acetyltransferase, mitochondrial (575 aa).

The N-terminal 35 residues, M1 to S35, are a transit peptide targeting the mitochondrion. Residues F398–H557 enclose the N-acetyltransferase domain.

Belongs to the acetyltransferase family.

Its subcellular location is the mitochondrion. It carries out the reaction L-glutamate + acetyl-CoA = N-acetyl-L-glutamate + CoA + H(+). The protein operates within amino-acid biosynthesis; L-arginine biosynthesis; N(2)-acetyl-L-ornithine from L-glutamate: step 1/4. N-acetylglutamate synthase involved in arginine biosynthesis. The sequence is that of Amino-acid acetyltransferase, mitochondrial (ARG2) from Debaryomyces hansenii (strain ATCC 36239 / CBS 767 / BCRC 21394 / JCM 1990 / NBRC 0083 / IGC 2968) (Yeast).